Reading from the N-terminus, the 262-residue chain is MNILVVESQEKLAEAGYKLIENVVKSKGNPTLGMATGSSPLGIYAEIRKNKLDTSHVTTVNLDEYVNLPHEDKNSYHYFMKEQLFDHLPFKATYVPNGMANDLEEECNRYEGILAANPVDLQILGIGENGHIGFNEPGTPFHSRTHIVELTESTRQANRRFFEKEEDVPTHAITMGIGSIMKAKQILLVAMGPKKAEAVKELLQGEYSEACPATVLQRHPNVTVIADQEALSLCSEAIADEHRQVFTISDLLSDSRVGETAN.

The active-site Proton acceptor; for enolization step is D63. N129 serves as the catalytic For ring-opening step. The Proton acceptor; for ring-opening step role is filled by H131. The active-site For ring-opening step is E136.

It belongs to the glucosamine/galactosamine-6-phosphate isomerase family. NagB subfamily.

It carries out the reaction alpha-D-glucosamine 6-phosphate + H2O = beta-D-fructose 6-phosphate + NH4(+). It functions in the pathway amino-sugar metabolism; N-acetylneuraminate degradation; D-fructose 6-phosphate from N-acetylneuraminate: step 5/5. In terms of biological role, catalyzes the reversible isomerization-deamination of glucosamine 6-phosphate (GlcN6P) to form fructose 6-phosphate (Fru6P) and ammonium ion. In Bacillus cytotoxicus (strain DSM 22905 / CIP 110041 / 391-98 / NVH 391-98), this protein is Glucosamine-6-phosphate deaminase.